The primary structure comprises 246 residues: Pyridoxine 5'-phosphate synthase (246 aa).

A 3-amino-2-oxopropyl phosphate-binding site is contributed by Asn-7. Residue 9 to 10 (DH) participates in 1-deoxy-D-xylulose 5-phosphate binding. Residue Arg-18 participates in 3-amino-2-oxopropyl phosphate binding. His-43 (proton acceptor) is an active-site residue. 2 residues coordinate 1-deoxy-D-xylulose 5-phosphate: Arg-45 and His-50. Catalysis depends on Glu-70, which acts as the Proton acceptor. Residue Thr-100 coordinates 1-deoxy-D-xylulose 5-phosphate. The active-site Proton donor is His-190. Residues Gly-191 and 212 to 213 (GH) contribute to the 3-amino-2-oxopropyl phosphate site.

Belongs to the PNP synthase family. Homooctamer; tetramer of dimers.

It is found in the cytoplasm. The enzyme catalyses 3-amino-2-oxopropyl phosphate + 1-deoxy-D-xylulose 5-phosphate = pyridoxine 5'-phosphate + phosphate + 2 H2O + H(+). Its pathway is cofactor biosynthesis; pyridoxine 5'-phosphate biosynthesis; pyridoxine 5'-phosphate from D-erythrose 4-phosphate: step 5/5. Its function is as follows. Catalyzes the complicated ring closure reaction between the two acyclic compounds 1-deoxy-D-xylulose-5-phosphate (DXP) and 3-amino-2-oxopropyl phosphate (1-amino-acetone-3-phosphate or AAP) to form pyridoxine 5'-phosphate (PNP) and inorganic phosphate. This chain is Pyridoxine 5'-phosphate synthase, found in Prochlorococcus marinus (strain SARG / CCMP1375 / SS120).